A 289-amino-acid chain; its full sequence is tRNA U34 carboxymethyltransferase (289 aa).

Carboxy-S-adenosyl-L-methionine-binding positions include lysine 60, tryptophan 74, lysine 79, glycine 98, 120 to 122 (DPS), 147 to 148 (VE), tyrosine 167, and arginine 282.

This sequence belongs to the class I-like SAM-binding methyltransferase superfamily. CmoB family. In terms of assembly, homotetramer.

The enzyme catalyses carboxy-S-adenosyl-L-methionine + 5-hydroxyuridine(34) in tRNA = 5-carboxymethoxyuridine(34) in tRNA + S-adenosyl-L-homocysteine + H(+). Functionally, catalyzes carboxymethyl transfer from carboxy-S-adenosyl-L-methionine (Cx-SAM) to 5-hydroxyuridine (ho5U) to form 5-carboxymethoxyuridine (cmo5U) at position 34 in tRNAs. The protein is tRNA U34 carboxymethyltransferase of Campylobacter concisus (strain 13826).